The sequence spans 289 residues: Lipoyl synthase 2 (289 aa).

Residues cysteine 43, cysteine 48, cysteine 54, cysteine 69, cysteine 73, cysteine 76, and serine 282 each coordinate [4Fe-4S] cluster. The Radical SAM core domain occupies tyrosine 55–alanine 271.

It belongs to the radical SAM superfamily. Lipoyl synthase family. [4Fe-4S] cluster serves as cofactor.

It is found in the cytoplasm. It catalyses the reaction [[Fe-S] cluster scaffold protein carrying a second [4Fe-4S](2+) cluster] + N(6)-octanoyl-L-lysyl-[protein] + 2 oxidized [2Fe-2S]-[ferredoxin] + 2 S-adenosyl-L-methionine + 4 H(+) = [[Fe-S] cluster scaffold protein] + N(6)-[(R)-dihydrolipoyl]-L-lysyl-[protein] + 4 Fe(3+) + 2 hydrogen sulfide + 2 5'-deoxyadenosine + 2 L-methionine + 2 reduced [2Fe-2S]-[ferredoxin]. The protein operates within protein modification; protein lipoylation via endogenous pathway; protein N(6)-(lipoyl)lysine from octanoyl-[acyl-carrier-protein]: step 2/2. In terms of biological role, catalyzes the radical-mediated insertion of two sulfur atoms into the C-6 and C-8 positions of the octanoyl moiety bound to the lipoyl domains of lipoate-dependent enzymes, thereby converting the octanoylated domains into lipoylated derivatives. The polypeptide is Lipoyl synthase 2 (Gloeobacter violaceus (strain ATCC 29082 / PCC 7421)).